We begin with the raw amino-acid sequence, 552 residues long: Putative transport protein HS_1470 (552 aa).

5 helical membrane-spanning segments follow: residues 4-24, 28-48, 67-87, 95-115, and 157-177; these read IAIT…IGHW, GVGL…HFMN, LILF…ASLL, GLAT…YKVV, and MAYA…MWLI. RCK C-terminal domains are found at residues 190-275 and 277-360; these read KQFQ…VIGE and IDMP…IIGN. Transmembrane regions (helical) follow at residues 370 to 390, 402 to 424, 438 to 458, 463 to 483, 495 to 515, and 529 to 549; these read MLPV…PFYI, AGGP…LYWF, IVLF…DTLV, LEWM…TGII, LCGL…ANAI, and VYPL…ILLW.

This sequence belongs to the AAE transporter (TC 2.A.81) family. YidE subfamily.

It localises to the cell membrane. The polypeptide is Putative transport protein HS_1470 (Histophilus somni (strain 129Pt) (Haemophilus somnus)).